The primary structure comprises 1478 residues: Phospholipase B1, membrane-associated (1478 aa).

Residues 1–27 (MELYPGVSPVGLLLLLLLGQGPSQIHG) form the signal peptide. Residues 28-1422 (SSGENTLAWQ…KAEEPSNALY (1395 aa)) lie on the Extracellular side of the membrane. Repeat copies occupy residues 43–351 (WTLK…YKNS), 366–711 (MKEG…TKNS), 712–1058 (NLGN…FRNS), and 1068–1407 (IENW…LRNS). The interval 43–1407 (WTLKNFPFPC…RPFLYTLRNS (1365 aa)) is 4 X 308-326 AA approximate repeats. N-linked (GlcNAc...) asparagine glycosylation occurs at N180. Active-site residues include S404 and D518. 3 N-linked (GlcNAc...) asparagine glycosylation sites follow: N525, N626, and N637. The active site involves H659. N-linked (GlcNAc...) asparagine glycosylation is found at N715, N764, N787, N801, N830, N926, N1227, N1280, N1289, and N1387. The necessary for membrane localization stretch occupies residues 1408–1450 (QLLPDKAEEPSNALYWAVPVAAIGGLAVGILGVMLWRTVKPVQ). The helical transmembrane segment at 1423–1443 (WAVPVAAIGGLAVGILGVMLW) threads the bilayer. At 1444–1478 (RTVKPVQQEEEEEDTLPNTSVTQDAVSEKRLKAGN) the chain is on the cytoplasmic side. The interval 1451–1478 (QEEEEEDTLPNTSVTQDAVSEKRLKAGN) is disordered. A compositionally biased stretch (polar residues) spans 1459–1468 (LPNTSVTQDA). Residues 1469 to 1478 (VSEKRLKAGN) are compositionally biased toward basic and acidic residues.

The protein belongs to the 'GDSL' lipolytic enzyme family. Phospholipase B1 subfamily. Undergoes proteolytic cleavage in the ileum.

Its subcellular location is the apical cell membrane. The enzyme catalyses a 1,2-diacyl-sn-glycero-3-phosphocholine + H2O = a 1-acyl-sn-glycero-3-phosphocholine + a fatty acid + H(+). It catalyses the reaction a 1-O-alkyl-2-acyl-sn-glycero-3-phosphocholine + H2O = a 1-O-alkyl-sn-glycero-3-phosphocholine + a fatty acid + H(+). The catalysed reaction is a 1-acyl-sn-glycero-3-phosphocholine + H2O = sn-glycerol 3-phosphocholine + a fatty acid + H(+). It carries out the reaction a triacylglycerol + H2O = a diacylglycerol + a fatty acid + H(+). The enzyme catalyses 1,2-dihexadecanoyl-sn-glycero-3-phosphocholine + H2O = 1-hexadecanoyl-sn-glycero-3-phosphocholine + hexadecanoate + H(+). It catalyses the reaction 1-hexadecanoyl-2-(9Z-octadecenoyl)-sn-glycero-3-phosphocholine + H2O = 1-hexadecanoyl-sn-glycero-3-phosphocholine + (9Z)-octadecenoate + H(+). The catalysed reaction is 1,2-di-(9Z-octadecenoyl)-sn-glycero-3-phosphocholine + H2O = 1-(9Z-octadecenoyl)-sn-glycero-3-phosphocholine + (9Z)-octadecenoate + H(+). It carries out the reaction 1-hexadecanoyl-2-(9Z,12Z-octadecadienoyl)-sn-glycero-3-phosphocholine + H2O = (9Z,12Z)-octadecadienoate + 1-hexadecanoyl-sn-glycero-3-phosphocholine + H(+). The enzyme catalyses 1-hexadecanoyl-2-(9Z,12Z-octadecadienoyl)-sn-glycero-3-phosphocholine + H2O = 2-(9Z,12Z-octadecadienoyl)-sn-glycero-3-phosphocholine + hexadecanoate + H(+). It catalyses the reaction 1-hexadecanoyl-2-(9Z-octadecenoyl)-sn-glycero-3-phosphoethanolamine + H2O = 1-hexadecanoyl-sn-glycero-3-phosphoethanolamine + (9Z)-octadecenoate + H(+). The catalysed reaction is 1-hexadecanoyl-2-(9Z-octadecenoyl)-sn-glycero-3-phospho-(1'-sn-glycerol) + H2O = 1-hexadecanoyl-sn-glycero-3-phospho-(1'-sn-glycerol) + (9Z)-octadecenoate + H(+). It carries out the reaction 1,2-dihexadecanoyl-sn-glycero-3-phosphocholine + 2 H2O = sn-glycerol 3-phosphocholine + 2 hexadecanoate + 2 H(+). The enzyme catalyses 1-O-hexadecyl-2-(9Z)-octadecenoyl-sn-glycero-3-phosphocholine + H2O = 1-O-hexadecyl-sn-glycero-3-phosphocholine + (9Z)-octadecenoate + H(+). It catalyses the reaction 1-hexadecanoyl-sn-glycero-3-phosphocholine + H2O = sn-glycerol 3-phosphocholine + hexadecanoate + H(+). The catalysed reaction is 1,2,3-tri-(9Z-octadecenoyl)-glycerol + H2O = di-(9Z)-octadecenoylglycerol + (9Z)-octadecenoate + H(+). It carries out the reaction 1-hexadecanoyl-2-(9Z)-octadecenoyl-3-octadecanoyl-sn-glycerol + H2O = 1-hexadecanoyl-2-(9Z-octadecenoyl)-sn-glycerol + octadecanoate + H(+). The enzyme catalyses 1,3-dihexadecanoyl-2-(9Z-octadecenoyl)glycerol + H2O = 1,3-dihexadecanoylglycerol + (9Z)-octadecenoate + H(+). It catalyses the reaction 1,3-dihexadecanoyl-2-(9Z-octadecenoyl)glycerol + H2O = 1-hexadecanoyl-2-(9Z-octadecenoyl)-glycerol + hexadecanoate + H(+). The catalysed reaction is 1-hexadecanoyl-2-(9Z)-octadecenoyl-3-octadecanoyl-sn-glycerol + H2O = 1-hexadecanoyl-3-octadecanoyl-sn-glycerol + (9Z)-octadecenoate + H(+). It carries out the reaction 1-hexadecanoyl-2-(9Z)-octadecenoyl-3-octadecanoyl-sn-glycerol + H2O = 2-(9Z-octadecenoyl)-3-octadecanoyl-sn-glycerol + hexadecanoate + H(+). The enzyme catalyses 1-octadecanoyl-2-(9Z,12Z)-octadecadienoyl-sn-glycerol + H2O = 1-octadecanoyl-sn-glycerol + (9Z,12Z)-octadecadienoate + H(+). It catalyses the reaction 1,2-di-(9Z-octadecenoyl)-sn-glycerol + H2O = 1-(9Z-octadecenoyl)-sn-glycerol + (9Z)-octadecenoate + H(+). The catalysed reaction is 2,3-di-(9Z)-octadecenoyl-sn-glycerol + H2O = 3-(9Z-octadecenoyl)-sn-glycerol + (9Z)-octadecenoate + H(+). It carries out the reaction 1,3-di-(9Z-octadecenoyl)-glycerol + H2O = 1-(9Z-octadecenoyl)-glycerol + (9Z)-octadecenoate + H(+). The enzyme catalyses 1-(9Z-octadecenoyl)-glycerol + H2O = glycerol + (9Z)-octadecenoate + H(+). It catalyses the reaction 2-(9Z-octadecenoyl)-glycerol + H2O = glycerol + (9Z)-octadecenoate + H(+). In terms of biological role, calcium-independent membrane-associated phospholipase that catalyzes complete diacylation of phospholipids by hydrolyzing both sn-1 and sn-2 fatty acyl chains attached to the glycerol backbone (phospholipase B activity). Has dual phospholipase and lysophospholipase activities toward diacylphospholipids. Preferentially cleaves sn-2 ester bonds over sn-1 bonds. Acts as a lipase toward glycerolipid substrates. Hydrolyzes fatty acyl chains of diacylglycerols with preference for the sn-2 position and of triacylglycerols with not positional selectivity. May also hydrolyze long chain retinyl esters such as retinyl palmitate. May contribute to digestion of dietary phospholipids, glycerolipids and retinoids, facilitating lipid absorption at the brush border. The sequence is that of Phospholipase B1, membrane-associated (Plb1) from Mus musculus (Mouse).